Here is a 733-residue protein sequence, read N- to C-terminus: 1,4-alpha-glucan branching enzyme GlgB (733 aa).

D409 functions as the Nucleophile in the catalytic mechanism. E462 (proton donor) is an active-site residue.

This sequence belongs to the glycosyl hydrolase 13 family. GlgB subfamily. In terms of assembly, monomer.

The enzyme catalyses Transfers a segment of a (1-&gt;4)-alpha-D-glucan chain to a primary hydroxy group in a similar glucan chain.. The protein operates within glycan biosynthesis; glycogen biosynthesis. In terms of biological role, catalyzes the formation of the alpha-1,6-glucosidic linkages in glycogen by scission of a 1,4-alpha-linked oligosaccharide from growing alpha-1,4-glucan chains and the subsequent attachment of the oligosaccharide to the alpha-1,6 position. The chain is 1,4-alpha-glucan branching enzyme GlgB from Gloeobacter violaceus (strain ATCC 29082 / PCC 7421).